We begin with the raw amino-acid sequence, 504 residues long: Cytochrome P450 7A1 (504 aa).

The chain crosses the membrane as a helical span at residues 4–24; it reads TSLIWGIAIAACCCLWLILGI. Heme is bound at residue cysteine 444.

Belongs to the cytochrome P450 family. Heme serves as cofactor. In terms of tissue distribution, detected in liver.

It is found in the endoplasmic reticulum membrane. It localises to the microsome membrane. It catalyses the reaction cholesterol + reduced [NADPH--hemoprotein reductase] + O2 = 7alpha-hydroxycholesterol + oxidized [NADPH--hemoprotein reductase] + H2O + H(+). The enzyme catalyses 4beta-hydroxycholesterol + reduced [NADPH--hemoprotein reductase] + O2 = 4beta,7alpha-dihydroxycholesterol + oxidized [NADPH--hemoprotein reductase] + H2O + H(+). The catalysed reaction is lathosterol + reduced [NADPH--hemoprotein reductase] + O2 = 7alpha,8alpha-epoxy-5alpha-cholestan-3beta-ol + oxidized [NADPH--hemoprotein reductase] + H2O + H(+). It carries out the reaction lathosterol + reduced [NADPH--hemoprotein reductase] + O2 = 5alpha-cholestan-7-oxo-3beta-ol + oxidized [NADPH--hemoprotein reductase] + H2O + H(+). It catalyses the reaction 7-dehydrocholesterol + reduced [NADPH--hemoprotein reductase] + O2 = 7-oxocholesterol + oxidized [NADPH--hemoprotein reductase] + H2O + H(+). The enzyme catalyses (24S)-hydroxycholesterol + reduced [NADPH--hemoprotein reductase] + O2 = (24S)-7alpha-dihydroxycholesterol + oxidized [NADPH--hemoprotein reductase] + H2O + H(+). The catalysed reaction is (24R)-hydroxycholesterol + reduced [NADPH--hemoprotein reductase] + O2 = (24R)-7alpha-dihydroxycholesterol + oxidized [NADPH--hemoprotein reductase] + H2O + H(+). Its pathway is lipid metabolism; bile acid biosynthesis. It functions in the pathway steroid metabolism; cholesterol degradation. Its function is as follows. A cytochrome P450 monooxygenase involved in the metabolism of endogenous cholesterol and its oxygenated derivatives (oxysterols). Mechanistically, uses molecular oxygen inserting one oxygen atom into a substrate, and reducing the second into a water molecule, with two electrons provided by NADPH via cytochrome P450 reductase (CPR; NADPH-ferrihemoprotein reductase). Functions as a critical regulatory enzyme of bile acid biosynthesis and cholesterol homeostasis. Catalyzes the hydroxylation of carbon hydrogen bond at 7-alpha position of cholesterol, a rate-limiting step in cholesterol catabolism and bile acid biosynthesis. 7-alpha hydroxylates several oxysterols, including 4beta-hydroxycholesterol and 24-hydroxycholesterol. Catalyzes the oxidation of the 7,8 double bond of 7-dehydrocholesterol and lathosterol with direct and predominant formation of the 7-keto derivatives. The protein is Cytochrome P450 7A1 of Homo sapiens (Human).